The chain runs to 224 residues: 2-C-methyl-D-erythritol 4-phosphate cytidylyltransferase (224 aa).

The protein belongs to the IspD/TarI cytidylyltransferase family. IspD subfamily.

It catalyses the reaction 2-C-methyl-D-erythritol 4-phosphate + CTP + H(+) = 4-CDP-2-C-methyl-D-erythritol + diphosphate. The protein operates within isoprenoid biosynthesis; isopentenyl diphosphate biosynthesis via DXP pathway; isopentenyl diphosphate from 1-deoxy-D-xylulose 5-phosphate: step 2/6. In terms of biological role, catalyzes the formation of 4-diphosphocytidyl-2-C-methyl-D-erythritol from CTP and 2-C-methyl-D-erythritol 4-phosphate (MEP). This is 2-C-methyl-D-erythritol 4-phosphate cytidylyltransferase from Saccharopolyspora erythraea (strain ATCC 11635 / DSM 40517 / JCM 4748 / NBRC 13426 / NCIMB 8594 / NRRL 2338).